The chain runs to 629 residues: Forkhead box protein O1-B (629 aa).

4 disordered regions span residues methionine 1 to glycine 54, cysteine 88 to asparagine 134, serine 211 to leucine 308, and lysine 359 to valine 397. Polar residues predominate over residues glutamine 36 to alanine 46. 2 stretches are compositionally biased toward low complexity: residues histidine 90–glutamine 107 and proline 115–arginine 133. A DNA-binding region (fork-head) is located at residues tryptophan 136–alanine 230. Residues threonine 240 to methionine 251 are compositionally biased toward basic residues. 3 stretches are compositionally biased toward polar residues: residues threonine 291–glycine 302, lysine 359–methionine 377, and serine 385–valine 397.

It is found in the cytoplasm. The protein resides in the nucleus. Functionally, transcription factor that regulates metabolic homeostasis in response to oxidative stress. Binds to the consensus sequence 5'-TT[G/A]TTTTG-3' and the related Daf-16 family binding element (DBE) with consensus sequence 5'-TT[G/A]TTTAC-3'. Main regulator of redox balance and osteoblast numbers and controls bone mass. Orchestrates the endocrine function of the skeleton in regulating glucose metabolism. May act as a positive regulator of apoptosis in cardiac smooth muscle cells as a result of its transcriptional activation of pro-apoptotic genes. The chain is Forkhead box protein O1-B (foxo1b) from Danio rerio (Zebrafish).